The sequence spans 29 residues: Dermaseptin-J5 (29 aa).

At V29 the chain carries Valine amide.

As to expression, expressed by the skin glands.

Its subcellular location is the secreted. Functionally, has antimicrobial activity. This Phasmahyla jandaia (Jandaia leaf frog) protein is Dermaseptin-J5.